A 188-amino-acid polypeptide reads, in one-letter code: Crossover junction endodeoxyribonuclease RuvC (188 aa).

Residues Asp-7, Glu-68, and Asp-141 contribute to the active site. Mg(2+)-binding residues include Asp-7, Glu-68, and Asp-141.

Belongs to the RuvC family. As to quaternary structure, homodimer which binds Holliday junction (HJ) DNA. The HJ becomes 2-fold symmetrical on binding to RuvC with unstacked arms; it has a different conformation from HJ DNA in complex with RuvA. In the full resolvosome a probable DNA-RuvA(4)-RuvB(12)-RuvC(2) complex forms which resolves the HJ. It depends on Mg(2+) as a cofactor.

The protein localises to the cytoplasm. It carries out the reaction Endonucleolytic cleavage at a junction such as a reciprocal single-stranded crossover between two homologous DNA duplexes (Holliday junction).. Functionally, the RuvA-RuvB-RuvC complex processes Holliday junction (HJ) DNA during genetic recombination and DNA repair. Endonuclease that resolves HJ intermediates. Cleaves cruciform DNA by making single-stranded nicks across the HJ at symmetrical positions within the homologous arms, yielding a 5'-phosphate and a 3'-hydroxyl group; requires a central core of homology in the junction. The consensus cleavage sequence is 5'-(A/T)TT(C/G)-3'. Cleavage occurs on the 3'-side of the TT dinucleotide at the point of strand exchange. HJ branch migration catalyzed by RuvA-RuvB allows RuvC to scan DNA until it finds its consensus sequence, where it cleaves and resolves the cruciform DNA. This is Crossover junction endodeoxyribonuclease RuvC from Mycobacterium avium (strain 104).